The primary structure comprises 237 residues: Sugar fermentation stimulation protein homolog (237 aa).

This sequence belongs to the SfsA family.

This chain is Sugar fermentation stimulation protein homolog, found in Thioalkalivibrio sulfidiphilus (strain HL-EbGR7).